The following is a 357-amino-acid chain: Palmitoyltransferase ZDHHC20-A (357 aa).

The Cytoplasmic segment spans residues Met-1–Leu-14. A helical transmembrane segment spans residues Ser-15–Val-35. Over Glu-36–Ile-50 the chain is Lumenal. The chain crosses the membrane as a helical span at residues Tyr-51–Ser-71. Over Ser-72 to Lys-166 the chain is Cytoplasmic. A DHHC domain is found at Arg-123–Ala-173. Cys-153 serves as the catalytic S-palmitoyl cysteine intermediate. The chain crosses the membrane as a helical span at residues Phe-167–Leu-187. The Lumenal portion of the chain corresponds to Gln-188–Lys-204. The chain crosses the membrane as a helical span at residues Phe-205–His-228. The Cytoplasmic portion of the chain corresponds to Leu-229–Ser-357.

Belongs to the DHHC palmitoyltransferase family.

The protein resides in the golgi apparatus membrane. Its subcellular location is the cell membrane. It localises to the cytoplasm. It is found in the perinuclear region. The protein localises to the endoplasmic reticulum membrane. The protein resides in the endoplasmic reticulum-Golgi intermediate compartment membrane. The catalysed reaction is L-cysteinyl-[protein] + hexadecanoyl-CoA = S-hexadecanoyl-L-cysteinyl-[protein] + CoA. The enzyme catalyses L-cysteinyl-[protein] + tetradecanoyl-CoA = S-tetradecanoyl-L-cysteinyl-[protein] + CoA. It catalyses the reaction L-cysteinyl-[protein] + octadecanoyl-CoA = S-octadecanoyl-L-cysteinyl-[protein] + CoA. In terms of biological role, palmitoyltransferase that could catalyze the addition of palmitate onto various protein substrates. Catalyzes palmitoylation of Cys residues on protein substrates and has a preference for acyl-CoA with C16 fatty acid chains but may also utilize acyl-CoA with C14 and C18 fatty acid chains. The polypeptide is Palmitoyltransferase ZDHHC20-A (Danio rerio (Zebrafish)).